We begin with the raw amino-acid sequence, 95 residues long: MAPQTSNLWLLLVVMMVMSQGCCQHWSYGLSPGGKRDLDSLSDTLGDIIERFPHADSPCSVLGCAEEPPFPKMYRMKGFIGSGTDRDNGHRTYKK.

The first 23 residues, 1–23, serve as a signal peptide directing secretion; sequence MAPQTSNLWLLLVVMMVMSQGCC. Position 24 is a pyrrolidone carboxylic acid (Gln-24). Gly-33 carries the glycine amide modification.

It belongs to the GnRH family.

Its subcellular location is the secreted. Functionally, stimulates the secretion of gonadotropins. The polypeptide is Progonadoliberin-1 (gnrh1) (Pagrus major (Red sea bream)).